The chain runs to 304 residues: MRTSLLVAALGLALAAALPGGAPLAQPDPEATMDRSLLQRQDLPYRFSAVDLDSVDGQRHYRLWLGRPLQAPPAAGYPVVWMLDGNAAVGALDESTLRRLADGDAPLLVAIGYRTPLRIDRAGRTFDYTPASPGQADQRDPLNGLPSGGADAFLDLLRDGMRPAVAAQAPLDTARQTLWGHSYGGLLVLHALFTRPGEFARYAAASPSLWWRDGAILGERAGLEQRLRGKRAELLLWRGSAEPASPRGSLKAEPGQAMARLVDDLRRVAGLTLDFQPLDGLGHGETLGASLRLLLARPAVERQR.

Residues 1 to 25 (MRTSLLVAALGLALAAALPGGAPLA) form the signal peptide. Catalysis depends on charge relay system residues Ser-182, Glu-242, and His-283.

This sequence belongs to the esterase D family. In terms of assembly, monomer.

Its subcellular location is the periplasm. It catalyses the reaction Fe(III)-enterobactin + 3 H2O + H(+) = Fe(III)-[N-(2,3-dihydroxybenzoyl)-L-serine] + 2 N-(2,3-dihydroxybenzoyl)-L-serine. It carries out the reaction Fe(III)-enterobactin + H2O = Fe(III)-[N-(2,3-dihydroxybenzoyl)-L-serine]3 + H(+). The catalysed reaction is Fe(III)-[N-(2,3-dihydroxybenzoyl)-L-serine]3 + H2O + H(+) = Fe(III)-[N-(2,3-dihydroxybenzoyl)-L-serine]2 + N-(2,3-dihydroxybenzoyl)-L-serine. The enzyme catalyses Fe(III)-[N-(2,3-dihydroxybenzoyl)-L-serine]2 + H2O + H(+) = Fe(III)-[N-(2,3-dihydroxybenzoyl)-L-serine] + N-(2,3-dihydroxybenzoyl)-L-serine. Its function is as follows. Catalyzes the hydrolysis of ferric enterobactin (Fe-Ent). Hydrolyzes Fe-Ent into three molecules of 2,3-dihydroxybenzoylserine (DHBS) still complexed with ferric iron. Iron reduction is necessary to obtain complete release of the metal from DHBS. It can hydrolyze salmochelin S4 (diglucosyl-C-Ent) but is not involved in iron acquisition by this siderophore. The protein is Iron(III) enterobactin esterase of Pseudomonas aeruginosa (strain ATCC 15692 / DSM 22644 / CIP 104116 / JCM 14847 / LMG 12228 / 1C / PRS 101 / PAO1).